Consider the following 296-residue polypeptide: N-acetylmuramic acid 6-phosphate etherase (296 aa).

The region spanning 54 to 217 (VTESFRKGGR…STTSMVGIGK (164 aa)) is the SIS domain. Glutamate 82 (proton donor) is an active-site residue. The active site involves glutamate 113.

It belongs to the GCKR-like family. MurNAc-6-P etherase subfamily. Homodimer.

The catalysed reaction is N-acetyl-D-muramate 6-phosphate + H2O = N-acetyl-D-glucosamine 6-phosphate + (R)-lactate. The protein operates within amino-sugar metabolism; N-acetylmuramate degradation. Functionally, specifically catalyzes the cleavage of the D-lactyl ether substituent of MurNAc 6-phosphate, producing GlcNAc 6-phosphate and D-lactate. The protein is N-acetylmuramic acid 6-phosphate etherase of Listeria welshimeri serovar 6b (strain ATCC 35897 / DSM 20650 / CCUG 15529 / CIP 8149 / NCTC 11857 / SLCC 5334 / V8).